Consider the following 597-residue polypeptide: Phosphoinositide phosphatase SAC7 (597 aa).

Residues 130–458 form the SAC domain; the sequence is LSVAEKTTGL…GDEISIQYSG (329 aa). Positions 393–404 match the Phosphatase catalytic core motif; the sequence is RSNCIDCLDRTN. 2 helical membrane passes run 528–548 and 559–579; these read AVAN…FATM and HKHL…AALV.

As to expression, ubiquitous.

The protein localises to the endoplasmic reticulum membrane. Its subcellular location is the cytoplasmic vesicle membrane. Its function is as follows. Phosphoinositide phosphatase that preferentially hydrolyzes PtdIns(4)P. Regulates the accumulation of PtdIns(4)P on membrane compartments at the tips of growing root hairs leading to proper root hair development. This Arabidopsis thaliana (Mouse-ear cress) protein is Phosphoinositide phosphatase SAC7 (SAC7).